Reading from the N-terminus, the 221-residue chain is Thymidylate kinase (221 aa).

Residue G12–S19 coordinates ATP.

This sequence belongs to the thymidylate kinase family.

It catalyses the reaction dTMP + ATP = dTDP + ADP. In terms of biological role, phosphorylation of dTMP to form dTDP in both de novo and salvage pathways of dTTP synthesis. This Paracidovorax citrulli (strain AAC00-1) (Acidovorax citrulli) protein is Thymidylate kinase.